The primary structure comprises 130 residues: Small ribosomal subunit protein uS8 (130 aa).

It belongs to the universal ribosomal protein uS8 family. Part of the 30S ribosomal subunit. Contacts proteins S5 and S12.

Functionally, one of the primary rRNA binding proteins, it binds directly to 16S rRNA central domain where it helps coordinate assembly of the platform of the 30S subunit. This is Small ribosomal subunit protein uS8 from Actinobacillus pleuropneumoniae serotype 5b (strain L20).